We begin with the raw amino-acid sequence, 96 residues long: Probable quinol oxidase subunit 4 (96 aa).

3 helical membrane-spanning segments follow: residues 8-28 (TVGF…TLYT), 36-56 (VTII…MFMH), and 68-88 (FKVI…YWVM).

This sequence belongs to the cytochrome c oxidase bacterial subunit 4 family.

It is found in the cell membrane. The catalysed reaction is 2 a quinol + O2 = 2 a quinone + 2 H2O. Catalyzes quinol oxidation with the concomitant reduction of oxygen to water. The sequence is that of Probable quinol oxidase subunit 4 (qoxD) from Staphylococcus epidermidis (strain ATCC 35984 / DSM 28319 / BCRC 17069 / CCUG 31568 / BM 3577 / RP62A).